The sequence spans 378 residues: MNIWLSMLTTTGLGAIIGGFTNHLAIKMLFRPHRPIYIGKFQVPFTPGLIPKRRDELAVQLGKMVVEHLLTPEGIGKKLTNEEFQKGLIHWAQVEVDKVITNEQSLRHMLGKWDVAHVEKEATEKIEQVITEKIQAFLEEYYTYTWEQALPHSVHEKIENAIPNVSAFILKRAIHFFESEEGKSRLSKMIDDFFASRGALLNLVGMFLGNVSVVDRVQPEVIKFLGQDGTKQLLTDVLQKEWEKLKGRDVKELETFVEKEMIVSSILSAVKVEETVSKFLNQSVQQVCEPVRETIIEKVVPGVVTKGLKWGTENVESILHNLHLAEIVQQEVSTFSTERLEELVLSITKNELKMITYLGALLGGMIGIVQGLLLLFLK.

The next 2 helical transmembrane spans lie at 1 to 21 and 357 to 377; these read MNIWLSMLTTTGLGAIIGGFT and YLGALLGGMIGIVQGLLLLFL.

This sequence belongs to the UPF0754 family.

The protein localises to the cell membrane. This Bacillus thuringiensis subsp. konkukian (strain 97-27) protein is UPF0754 membrane protein BT9727_0767.